A 456-amino-acid chain; its full sequence is Probable hexose phosphate transport protein (456 aa).

The next 11 membrane-spanning stretches (helical) occupy residues Ile34–Phe54, Leu70–Val90, Ile113–Trp133, Val161–Ile181, Gly185–Ile205, Tyr257–Val277, Leu302–Ser322, Gly331–Thr351, Phe363–Ala383, Ala394–Gly414, and Gly421–Leu441.

The protein belongs to the major facilitator superfamily. Organophosphate:Pi antiporter (OPA) (TC 2.A.1.4) family.

It is found in the cell membrane. Functionally, transport protein for sugar phosphate uptake. The polypeptide is Probable hexose phosphate transport protein (Chlamydia trachomatis serovar D (strain ATCC VR-885 / DSM 19411 / UW-3/Cx)).